The primary structure comprises 202 residues: Small ribosomal subunit protein uS4c (202 aa).

The S4 RNA-binding domain maps to 90–153; sequence MRLDNVIFRL…KSEAIISKNI (64 aa).

This sequence belongs to the universal ribosomal protein uS4 family. In terms of assembly, part of the 30S ribosomal subunit. Contacts protein S5. The interaction surface between S4 and S5 is involved in control of translational fidelity.

Its subcellular location is the plastid. The protein resides in the chloroplast. One of the primary rRNA binding proteins, it binds directly to 16S rRNA where it nucleates assembly of the body of the 30S subunit. Functionally, with S5 and S12 plays an important role in translational accuracy. The protein is Small ribosomal subunit protein uS4c (rps4) of Hypopterygium laricinum (Moss).